A 74-amino-acid polypeptide reads, in one-letter code: DNA-directed RNA polymerase subunit omega (74 aa).

This sequence belongs to the RNA polymerase subunit omega family. The RNAP catalytic core consists of 2 alpha, 1 beta, 1 beta' and 1 omega subunit. When a sigma factor is associated with the core the holoenzyme is formed, which can initiate transcription.

It carries out the reaction RNA(n) + a ribonucleoside 5'-triphosphate = RNA(n+1) + diphosphate. In terms of biological role, promotes RNA polymerase assembly. Latches the N- and C-terminal regions of the beta' subunit thereby facilitating its interaction with the beta and alpha subunits. The sequence is that of DNA-directed RNA polymerase subunit omega from Lactobacillus acidophilus (strain ATCC 700396 / NCK56 / N2 / NCFM).